The following is a 938-amino-acid chain: E3 ubiquitin-protein ligase CBL-B (938 aa).

Residues 35–167 are 4H; it reads PPKQAAADRR…KAIFPNGQFQ (133 aa). In terms of domain architecture, Cbl-PTB spans 35–343; that stretch reads PPKQAAADRR…GRSYNPDLTG (309 aa). The tract at residues 168–240 is EF-hand-like; sequence GDNFRITKAD…FEFDIFTRLF (73 aa). Ca(2+) is bound by residues aspartate 221, threonine 223, asparagine 225, tyrosine 227, and glutamate 232. The SH2-like stretch occupies residues 241–343; it reads QPWGSILRNW…GRSYNPDLTG (103 aa). Residue serine 282 is modified to Phosphoserine; by PKC/PRKCQ. Residue arginine 286 coordinates 4-O-phospho-L-tyrosine. The linker stretch occupies residues 344–372; sequence LCEPTPHDHIKVTQEQYELYCEMGSTFQL. At tyrosine 363 the chain carries Phosphotyrosine. The RING-type zinc-finger motif lies at 373-412; that stretch reads CKICAENDKDVKIEPCGHLMCTSCLTAWQESDGQGCPFCR. Positions 465–588 are disordered; it reads ASVRKCTDRQ…SVPSRDQPMP (124 aa). The segment covering 473–486 has biased composition (polar residues); it reads RQNSPVTSPGSSPL. Residues serine 476, serine 480, serine 484, serine 521, serine 525, and serine 529 each carry the phosphoserine modification. The interval 543-567 is interaction with VAV1; that stretch reads PLPAPPPPLRDPPPPPERPPPIPPD. Positions 544 to 566 are enriched in pro residues; that stretch reads LPAPPPPLRDPPPPPERPPPIPP. At serine 633 the chain carries Phosphoserine. 2 positions are modified to phosphotyrosine: tyrosine 664 and tyrosine 708. Disordered stretches follow at residues 702-725 and 771-885; these read EEDD…PSHC and DALP…EAAL. The span at 714-724 shows a compositional bias: polar residues; sequence HPVSLNSQPSH. A compositionally biased stretch (pro residues) spans 775-784; sequence PSLPPPPPPA. A compositionally biased stretch (low complexity) spans 794–804; the sequence is PPGSSSRPSSG. The span at 839–855 shows a compositional bias: polar residues; the sequence is NRASQDYDQLPSSSDGS. Tyrosine 845 bears the Phosphotyrosine mark. The interaction with SH3KBP1 stretch occupies residues 847-883; sequence QLPSSSDGSQAPARPPKPRPRRTAPEIHHRKPHGPEA. The span at 862–878 shows a compositional bias: basic residues; that stretch reads PKPRPRRTAPEIHHRKP. Residues 887 to 926 enclose the UBA domain; it reads NVDAKIAKLMGEGYAFEEVKRALEIAQNNLEVARSILREF.

Interacts with SH3 domain-containing proteins LCK, CRK and SORBS1. Interacts with LCP2 and ZAP70. Interacts with CBL. Interacts with SH3 domain-containing proteins VAV1, FYN, FGR, PLCG1, GRB2, CRKL, PIK3R1 and SH3KBP1/CIN85. Identified in heterotrimeric complexes with SH3KBP1/CIN85, CD2AP and ARHGEF7, where one CBLB peptide binds two copies of the other protein. Interacts with poly-ubiquitinated proteins. Dimerization is required for the binding of poly-ubiquitin, but not for the binding of mono-ubiquitin. Interacts with EGFR (phosphorylated). Interacts with IFT20. Phosphorylated on tyrosine and serine residues upon TCR or BCR activation, and upon various types of cell stimulation. Post-translationally, auto-ubiquitinated upon EGF-mediated cell activation or upon T-cell costimulation by CD28; which promotes proteasomal degradation.

It is found in the cytoplasm. It carries out the reaction S-ubiquitinyl-[E2 ubiquitin-conjugating enzyme]-L-cysteine + [acceptor protein]-L-lysine = [E2 ubiquitin-conjugating enzyme]-L-cysteine + N(6)-ubiquitinyl-[acceptor protein]-L-lysine.. It participates in protein modification; protein ubiquitination. E3 ubiquitin-protein ligase which accepts ubiquitin from specific E2 ubiquitin-conjugating enzymes, and transfers it to substrates, generally promoting their degradation by the proteasome. Negatively regulates TCR (T-cell receptor), BCR (B-cell receptor) and FCER1 (high affinity immunoglobulin epsilon receptor) signal transduction pathways. In naive T-cells, inhibits VAV1 activation upon TCR engagement and imposes a requirement for CD28 costimulation for proliferation and IL-2 production. Also acts by promoting PIK3R1/p85 ubiquitination, which impairs its recruitment to the TCR and subsequent activation. In activated T-cells, inhibits PLCG1 activation and calcium mobilization upon restimulation and promotes anergy. In B-cells, acts by ubiquitinating SYK and promoting its proteasomal degradation. Slightly promotes SRC ubiquitination. May be involved in EGFR ubiquitination and internalization. May be functionally coupled with the E2 ubiquitin-protein ligase UB2D3. In association with CBL, required for proper feedback inhibition of ciliary platelet-derived growth factor receptor-alpha (PDGFRA) signaling pathway via ubiquitination and internalization of PDGFRA. The polypeptide is E3 ubiquitin-protein ligase CBL-B (Cblb) (Rattus norvegicus (Rat)).